The primary structure comprises 159 residues: Ribosomal RNA large subunit methyltransferase H (159 aa).

S-adenosyl-L-methionine is bound by residues Leu76, Gly108, and 127-132 (FSKMTF).

This sequence belongs to the RNA methyltransferase RlmH family. In terms of assembly, homodimer.

The protein resides in the cytoplasm. It catalyses the reaction pseudouridine(1915) in 23S rRNA + S-adenosyl-L-methionine = N(3)-methylpseudouridine(1915) in 23S rRNA + S-adenosyl-L-homocysteine + H(+). Specifically methylates the pseudouridine at position 1915 (m3Psi1915) in 23S rRNA. This is Ribosomal RNA large subunit methyltransferase H from Staphylococcus saprophyticus subsp. saprophyticus (strain ATCC 15305 / DSM 20229 / NCIMB 8711 / NCTC 7292 / S-41).